Here is a 425-residue protein sequence, read N- to C-terminus: UDP-N-acetylglucosamine 1-carboxyvinyltransferase (425 aa).

22-23 (KN) contributes to the phosphoenolpyruvate binding site. Arg-91 is a UDP-N-acetyl-alpha-D-glucosamine binding site. The active-site Proton donor is the Cys-115. Residue Cys-115 is modified to 2-(S-cysteinyl)pyruvic acid O-phosphothioketal. UDP-N-acetyl-alpha-D-glucosamine contacts are provided by residues 120–124 (RPIDL), Asp-305, and Val-327.

The protein belongs to the EPSP synthase family. MurA subfamily.

It is found in the cytoplasm. It carries out the reaction phosphoenolpyruvate + UDP-N-acetyl-alpha-D-glucosamine = UDP-N-acetyl-3-O-(1-carboxyvinyl)-alpha-D-glucosamine + phosphate. The protein operates within cell wall biogenesis; peptidoglycan biosynthesis. In terms of biological role, cell wall formation. Adds enolpyruvyl to UDP-N-acetylglucosamine. The chain is UDP-N-acetylglucosamine 1-carboxyvinyltransferase from Coprothermobacter proteolyticus (strain ATCC 35245 / DSM 5265 / OCM 4 / BT).